Reading from the N-terminus, the 218-residue chain is Adenylate kinase (218 aa).

Residue 10 to 15 coordinates ATP; the sequence is GAGKGT. Positions 30-59 are NMP; that stretch reads STGDMIRETIKSGSVLGQELKKVLDAGELV. AMP-binding positions include T31, R36, 57 to 59, and Q92; that span reads ELV. The tract at residues 122–159 is LID; that stretch reads GRRIHPASGRTYHTKFNPPKVADKDDVTGEPLITRTDD. ATP is bound by residues R123 and 132 to 133; that span reads TY. Residues R156 and R167 each contribute to the AMP site. Q202 serves as a coordination point for ATP.

Belongs to the adenylate kinase family. As to quaternary structure, monomer.

The protein localises to the cytoplasm. It catalyses the reaction AMP + ATP = 2 ADP. It participates in purine metabolism; AMP biosynthesis via salvage pathway; AMP from ADP: step 1/1. In terms of biological role, catalyzes the reversible transfer of the terminal phosphate group between ATP and AMP. Plays an important role in cellular energy homeostasis and in adenine nucleotide metabolism. This Francisella tularensis subsp. holarctica (strain LVS) protein is Adenylate kinase.